Here is a 491-residue protein sequence, read N- to C-terminus: UDP-N-acetylmuramate--L-alanine ligase (491 aa).

Residue 126 to 132 participates in ATP binding; the sequence is GTHGKTT.

This sequence belongs to the MurCDEF family.

It is found in the cytoplasm. The catalysed reaction is UDP-N-acetyl-alpha-D-muramate + L-alanine + ATP = UDP-N-acetyl-alpha-D-muramoyl-L-alanine + ADP + phosphate + H(+). It functions in the pathway cell wall biogenesis; peptidoglycan biosynthesis. Cell wall formation. The protein is UDP-N-acetylmuramate--L-alanine ligase of Photorhabdus laumondii subsp. laumondii (strain DSM 15139 / CIP 105565 / TT01) (Photorhabdus luminescens subsp. laumondii).